The primary structure comprises 238 residues: 1-(5-phosphoribosyl)-5-[(5-phosphoribosylamino)methylideneamino] imidazole-4-carboxamide isomerase (238 aa).

Aspartate 8 acts as the Proton acceptor in catalysis. Aspartate 129 serves as the catalytic Proton donor.

The protein belongs to the HisA/HisF family.

It localises to the cytoplasm. It catalyses the reaction 1-(5-phospho-beta-D-ribosyl)-5-[(5-phospho-beta-D-ribosylamino)methylideneamino]imidazole-4-carboxamide = 5-[(5-phospho-1-deoxy-D-ribulos-1-ylimino)methylamino]-1-(5-phospho-beta-D-ribosyl)imidazole-4-carboxamide. It participates in amino-acid biosynthesis; L-histidine biosynthesis; L-histidine from 5-phospho-alpha-D-ribose 1-diphosphate: step 4/9. This Lacticaseibacillus paracasei (strain ATCC 334 / BCRC 17002 / CCUG 31169 / CIP 107868 / KCTC 3260 / NRRL B-441) (Lactobacillus paracasei) protein is 1-(5-phosphoribosyl)-5-[(5-phosphoribosylamino)methylideneamino] imidazole-4-carboxamide isomerase.